The chain runs to 1043 residues: V(D)J recombination-activating protein 1 (1043 aa).

Basic and acidic residues-rich tracts occupy residues 39–54 and 87–98; these read EKAPEKAQTEKQDSSE and FLKESHEDGKAR. The interval 39–98 is disordered; it reads EKAPEKAQTEKQDSSEGKPSLEQSPAVLDKPGGQKSALPQPAFKPHPKFLKESHEDGKAR. Residue Lys234 forms a Glycyl lysine isopeptide (Lys-Gly) (interchain with G-Cter in ubiquitin) linkage. The Zn(2+) site is built by Cys269, His273, Cys293, Cys296, His298, Cys308, His310, Cys313, Cys316, Cys328, Cys331, Cys358, Cys363, His375, and His379. The segment at 293–332 adopts an RING-type zinc-finger fold; sequence CQICEHILADPVETSCKHVFCRICILRCLKVMGSSCPSCH. An RAG1-type zinc finger spans residues 354 to 383; that stretch reads LMVKCPAKECNEEISLEKYNHHISSHKESK. Positions 392–459 form a DNA-binding region, NBD; sequence GGRPRQHLLS…QADELEAIMR (68 aa). A divalent metal cation-binding residues include Asp603, Asp711, and Glu965.

The protein belongs to the RAG1 family. Homodimer. Component of the RAG complex composed of core components RAG1 and RAG2, and associated component HMGB1 or HMGB2. Interacts with DCAF1, leading to recruitment of the CUL4A-RBX1-DDB1-DCAF1/VPRBP complex to ubiquitinate proteins and limit error-prone repair during V(D)J recombination. It depends on Mg(2+) as a cofactor. Mn(2+) serves as cofactor. In terms of processing, autoubiquitinated in the presence of CDC34/UBCH3.

It is found in the nucleus. The enzyme catalyses S-ubiquitinyl-[E2 ubiquitin-conjugating enzyme]-L-cysteine + [acceptor protein]-L-lysine = [E2 ubiquitin-conjugating enzyme]-L-cysteine + N(6)-ubiquitinyl-[acceptor protein]-L-lysine.. Functionally, catalytic component of the RAG complex, a multiprotein complex that mediates the DNA cleavage phase during V(D)J recombination. V(D)J recombination assembles a diverse repertoire of immunoglobulin and T-cell receptor genes in developing B and T-lymphocytes through rearrangement of different V (variable), in some cases D (diversity), and J (joining) gene segments. In the RAG complex, RAG1 mediates the DNA-binding to the conserved recombination signal sequences (RSS) and catalyzes the DNA cleavage activities by introducing a double-strand break between the RSS and the adjacent coding segment. RAG2 is not a catalytic component but is required for all known catalytic activities. DNA cleavage occurs in 2 steps: a first nick is introduced in the top strand immediately upstream of the heptamer, generating a 3'-hydroxyl group that can attack the phosphodiester bond on the opposite strand in a direct transesterification reaction, thereby creating 4 DNA ends: 2 hairpin coding ends and 2 blunt, 5'-phosphorylated ends. The chromatin structure plays an essential role in the V(D)J recombination reactions and the presence of histone H3 trimethylated at 'Lys-4' (H3K4me3) stimulates both the nicking and haipinning steps. The RAG complex also plays a role in pre-B cell allelic exclusion, a process leading to expression of a single immunoglobulin heavy chain allele to enforce clonality and monospecific recognition by the B-cell antigen receptor (BCR) expressed on individual B-lymphocytes. The introduction of DNA breaks by the RAG complex on one immunoglobulin allele induces ATM-dependent repositioning of the other allele to pericentromeric heterochromatin, preventing accessibility to the RAG complex and recombination of the second allele. In addition to its endonuclease activity, RAG1 also acts as an E3 ubiquitin-protein ligase that mediates monoubiquitination of histone H3. Histone H3 monoubiquitination is required for the joining step of V(D)J recombination. Mediates polyubiquitination of KPNA1. The protein is V(D)J recombination-activating protein 1 (RAG1) of Sus scrofa (Pig).